Consider the following 139-residue polypeptide: ATP synthase epsilon chain (139 aa).

Belongs to the ATPase epsilon chain family. In terms of assembly, F-type ATPases have 2 components, CF(1) - the catalytic core - and CF(0) - the membrane proton channel. CF(1) has five subunits: alpha(3), beta(3), gamma(1), delta(1), epsilon(1). CF(0) has three main subunits: a, b and c.

It is found in the cell membrane. Its function is as follows. Produces ATP from ADP in the presence of a proton gradient across the membrane. The sequence is that of ATP synthase epsilon chain from Enterococcus faecalis (strain ATCC 700802 / V583).